Reading from the N-terminus, the 652-residue chain is Pesticidal crystal protein Cry3Bb (652 aa).

Residues 1 to 12 (MNPNNRSEHDTI) show a composition bias toward basic and acidic residues. 2 disordered regions span residues 1 to 33 (MNPN…ADNP) and 433 to 465 (KNET…ETTD). Over residues 14–33 (VTPNSELQTNHNQYPLADNP) the composition is skewed to polar residues.

The protein belongs to the delta endotoxin family. As to quaternary structure, monomer.

Its function is as follows. Promotes colloidosmotic lysis by binding to the midgut epithelial cells of Coleoptera. Has moderate level of toxicity to southern corn rootworm. The polypeptide is Pesticidal crystal protein Cry3Bb (cry3Bb) (Bacillus thuringiensis).